Here is a 303-residue protein sequence, read N- to C-terminus: GMP synthase [glutamine-hydrolyzing] subunit B (303 aa).

In terms of domain architecture, GMPS ATP-PPase spans Met-1–Arg-183. Ser-28–Ser-34 is an ATP binding site.

In terms of assembly, heterodimer composed of a glutamine amidotransferase subunit (A) and a GMP-binding subunit (B).

It carries out the reaction XMP + L-glutamine + ATP + H2O = GMP + L-glutamate + AMP + diphosphate + 2 H(+). The protein operates within purine metabolism; GMP biosynthesis; GMP from XMP (L-Gln route): step 1/1. Functionally, catalyzes the synthesis of GMP from XMP. The polypeptide is GMP synthase [glutamine-hydrolyzing] subunit B (guaAB) (Archaeoglobus fulgidus (strain ATCC 49558 / DSM 4304 / JCM 9628 / NBRC 100126 / VC-16)).